Here is a 178-residue protein sequence, read N- to C-terminus: Large ribosomal subunit protein uL6 (178 aa).

This sequence belongs to the universal ribosomal protein uL6 family. Part of the 50S ribosomal subunit.

In terms of biological role, this protein binds to the 23S rRNA, and is important in its secondary structure. It is located near the subunit interface in the base of the L7/L12 stalk, and near the tRNA binding site of the peptidyltransferase center. The protein is Large ribosomal subunit protein uL6 of Geobacillus kaustophilus (strain HTA426).